The primary structure comprises 95 residues: Integration host factor subunit beta (95 aa).

The protein belongs to the bacterial histone-like protein family. In terms of assembly, heterodimer of an alpha and a beta chain.

Functionally, this protein is one of the two subunits of integration host factor, a specific DNA-binding protein that functions in genetic recombination as well as in transcriptional and translational control. This chain is Integration host factor subunit beta, found in Colwellia psychrerythraea (strain 34H / ATCC BAA-681) (Vibrio psychroerythus).